Reading from the N-terminus, the 114-residue chain is Large ribosomal subunit protein bL19 (114 aa).

This sequence belongs to the bacterial ribosomal protein bL19 family.

In terms of biological role, this protein is located at the 30S-50S ribosomal subunit interface and may play a role in the structure and function of the aminoacyl-tRNA binding site. In Acetivibrio thermocellus (strain ATCC 27405 / DSM 1237 / JCM 9322 / NBRC 103400 / NCIMB 10682 / NRRL B-4536 / VPI 7372) (Clostridium thermocellum), this protein is Large ribosomal subunit protein bL19.